The primary structure comprises 578 residues: Proline--tRNA ligase (578 aa).

It belongs to the class-II aminoacyl-tRNA synthetase family. ProS type 1 subfamily. As to quaternary structure, homodimer.

The protein resides in the cytoplasm. The enzyme catalyses tRNA(Pro) + L-proline + ATP = L-prolyl-tRNA(Pro) + AMP + diphosphate. In terms of biological role, catalyzes the attachment of proline to tRNA(Pro) in a two-step reaction: proline is first activated by ATP to form Pro-AMP and then transferred to the acceptor end of tRNA(Pro). As ProRS can inadvertently accommodate and process non-cognate amino acids such as alanine and cysteine, to avoid such errors it has two additional distinct editing activities against alanine. One activity is designated as 'pretransfer' editing and involves the tRNA(Pro)-independent hydrolysis of activated Ala-AMP. The other activity is designated 'posttransfer' editing and involves deacylation of mischarged Ala-tRNA(Pro). The misacylated Cys-tRNA(Pro) is not edited by ProRS. The polypeptide is Proline--tRNA ligase (Burkholderia multivorans (strain ATCC 17616 / 249)).